Reading from the N-terminus, the 285-residue chain is Probable enoyl-CoA hydratase echA12 (285 aa).

Belongs to the enoyl-CoA hydratase/isomerase family.

The catalysed reaction is a (3S)-3-hydroxyacyl-CoA = a (2E)-enoyl-CoA + H2O. It carries out the reaction a 4-saturated-(3S)-3-hydroxyacyl-CoA = a (3E)-enoyl-CoA + H2O. Could possibly oxidize fatty acids using specific components. This chain is Probable enoyl-CoA hydratase echA12 (echA12), found in Mycobacterium bovis (strain ATCC BAA-935 / AF2122/97).